We begin with the raw amino-acid sequence, 501 residues long: Solute carrier family 2, facilitated glucose transporter member 5 (501 aa).

Met1 carries the post-translational modification N-acetylmethionine. Topologically, residues 1 to 18 are cytoplasmic; the sequence is MEQQDQSMKEGRLTLVLA. The chain crosses the membrane as a helical span at residues 19-39; that stretch reads LATLIAAFGSSFQYGYNVAAV. Tyr32 is a binding site for D-fructose. Residues 40–68 are Extracellular-facing; it reads NSPALLMQQFYNETYYGRTGEFMEDFPLT. A glycan (N-linked (GlcNAc...) asparagine) is linked at Asn51. Residues 69–91 traverse the membrane as a helical segment; it reads LLWSVTVSMFPFGGFIGSLLVGP. At 92-98 the chain is on the cytoplasmic side; it reads LVNKFGR. Residues 99–119 form a helical membrane-spanning segment; the sequence is KGALLFNNIFSIVPAILMGCS. The Extracellular portion of the chain corresponds to 120-126; sequence RVATSFE. Residues 127-149 form a helical membrane-spanning segment; the sequence is LIIISRLLVGICAGVSSNVVPMY. Over 150-161 the chain is Cytoplasmic; it reads LGELAPKNLRGA. The chain crosses the membrane as a helical span at residues 162–182; the sequence is LGVVPQLFITVGILVAQIFGL. Residue Gln167 coordinates D-fructose. At 183-192 the chain is on the extracellular side; it reads RNLLANVDGW. A helical transmembrane segment spans residues 193 to 213; sequence PILLGLTGVPAALQLLLLPFF. Topologically, residues 214 to 277 are cytoplasmic; sequence PESPRYLLIQ…LFRMRSLRWQ (64 aa). The chain crosses the membrane as a helical span at residues 278 to 298; the sequence is LLSIIVLMGGQQLSGVNAIYY. D-fructose is bound by residues Gln288 and 296–298; that span reads IYY. Topologically, residues 299–313 are extracellular; that stretch reads YADQIYLSAGVPEEH. Residues 314–334 form a helical membrane-spanning segment; it reads VQYVTAGTGAVNVVMTFCAVF. At 335–342 the chain is on the cytoplasmic side; sequence VVELLGRR. The chain crosses the membrane as a helical span at residues 343–363; sequence LLLLLGFSICLIACCVLTAAL. The Extracellular portion of the chain corresponds to 364 to 371; that stretch reads ALQDTVSW. A helical transmembrane segment spans residues 372–394; that stretch reads MPYISIVCVISYVIGHALGPSPI. His387 is a binding site for D-fructose. Topologically, residues 395-412 are cytoplasmic; sequence PALLITEIFLQSSRPSAF. A helical membrane pass occupies residues 413-433; that stretch reads MVGGSVHWLSNFTVGLIFPFI. 419-420 lines the D-fructose pocket; sequence HW. Residues 434–439 lie on the Extracellular side of the membrane; sequence QEGLGP. The helical transmembrane segment at 440-460 threads the bilayer; sequence YSFIVFAVICLLTTIYIFLIV. Over 461 to 501 the chain is Cytoplasmic; sequence PETKAKTFIEINQIFTKMNKVSEVYPEKEELKELPPVTSEQ.

Detected in skeletal muscle, and in jejunum brush border membrane and basolateral membrane (at protein level). Expressed in small intestine, and at much lower levels in kidney, skeletal muscle, and adipose tissue.

The protein localises to the apical cell membrane. It is found in the cell membrane. Its subcellular location is the sarcolemma. The enzyme catalyses D-fructose(out) = D-fructose(in). With respect to regulation, the uptake of 2-deoxyglucose is inhibited by cytochalasin B. Fructose transport is inhibited by the flavonoids epigallocatechin gallate and apigenin but not quercetin. Its function is as follows. Functions as a fructose transporter that has only low activity with other monosaccharides. Can mediate the uptake of 2-deoxyglucose, but with low efficiency. Essential for fructose uptake in the small intestine. Plays a role in the regulation of salt uptake and blood pressure in response to dietary fructose. Required for the development of high blood pressure in response to high dietary fructose intake. This is Solute carrier family 2, facilitated glucose transporter member 5 from Homo sapiens (Human).